The chain runs to 351 residues: D-threonate 4-phosphate dehydrogenase (351 aa).

Residues histidine 147 and threonine 148 each coordinate substrate. Residues histidine 177, histidine 221, and histidine 276 each contribute to the a divalent metal cation site. Substrate contacts are provided by lysine 284, asparagine 293, and arginine 302.

Belongs to the PdxA family. PdxA2 subfamily. As to quaternary structure, homodimer. The cofactor is a divalent metal cation.

The catalysed reaction is 4-O-phospho-D-threonate + NAD(+) = dihydroxyacetone phosphate + CO2 + NADH. Functionally, catalyzes the NAD-dependent oxidation and subsequent decarboxylation of D-threonate 4-phosphate to produce dihydroxyacetone phosphate (DHAP). Can also use 4-hydroxy-L-threonine 4-phosphate as substrate. This Bordetella bronchiseptica (strain ATCC BAA-588 / NCTC 13252 / RB50) (Alcaligenes bronchisepticus) protein is D-threonate 4-phosphate dehydrogenase.